We begin with the raw amino-acid sequence, 456 residues long: UDP-N-acetylmuramate--L-alanine ligase (456 aa).

Gly-112 to Thr-118 is an ATP binding site.

This sequence belongs to the MurCDEF family.

It is found in the cytoplasm. It catalyses the reaction UDP-N-acetyl-alpha-D-muramate + L-alanine + ATP = UDP-N-acetyl-alpha-D-muramoyl-L-alanine + ADP + phosphate + H(+). It functions in the pathway cell wall biogenesis; peptidoglycan biosynthesis. Cell wall formation. The protein is UDP-N-acetylmuramate--L-alanine ligase of Desulfatibacillum aliphaticivorans.